The sequence spans 175 residues: NADH dehydrogenase [ubiquinone] iron-sulfur protein 4, mitochondrial (175 aa).

Residues 1-42 (MAAVSISVSLRQAMLGRRAMATAAVSVCRVPSRLLSTSTWKL) constitute a mitochondrion transit peptide. Phosphoserine is present on serine 173.

Belongs to the complex I NDUFS4 subunit family. In terms of assembly, this is a component of the iron-sulfur (IP) fragment of the enzyme. Interacts with BCAP31 and TOMM40; the interaction mediates its translocation to the mitochondria; the interaction with BCAP31 is direct.

It localises to the mitochondrion inner membrane. Functionally, accessory subunit of the mitochondrial membrane respiratory chain NADH dehydrogenase (Complex I), that is believed not to be involved in catalysis. Complex I functions in the transfer of electrons from NADH to the respiratory chain. The immediate electron acceptor for the enzyme is believed to be ubiquinone. The sequence is that of NADH dehydrogenase [ubiquinone] iron-sulfur protein 4, mitochondrial (Ndufs4) from Mus musculus (Mouse).